Reading from the N-terminus, the 198-residue chain is Recombination protein RecR (198 aa).

A C4-type zinc finger spans residues 57–72; that stretch reads CSICGNLTDDDPCHIC. The 96-residue stretch at 80–175 folds into the Toprim domain; that stretch reads EIILVVEDSK…KVTRLARGLA (96 aa).

The protein belongs to the RecR family.

Functionally, may play a role in DNA repair. It seems to be involved in an RecBC-independent recombinational process of DNA repair. It may act with RecF and RecO. This is Recombination protein RecR from Streptococcus equi subsp. equi (strain 4047).